Here is a 260-residue protein sequence, read N- to C-terminus: Pyridoxine 5'-phosphate synthase (260 aa).

Residue N15 participates in 3-amino-2-oxopropyl phosphate binding. 1-deoxy-D-xylulose 5-phosphate is bound at residue 17–18 (DH). R26 provides a ligand contact to 3-amino-2-oxopropyl phosphate. H51 (proton acceptor) is an active-site residue. 1-deoxy-D-xylulose 5-phosphate-binding residues include R53 and H58. Residue E78 is the Proton acceptor of the active site. T108 serves as a coordination point for 1-deoxy-D-xylulose 5-phosphate. H199 (proton donor) is an active-site residue. Residues G200 and 221–222 (GH) contribute to the 3-amino-2-oxopropyl phosphate site.

The protein belongs to the PNP synthase family. As to quaternary structure, homooctamer; tetramer of dimers.

Its subcellular location is the cytoplasm. It carries out the reaction 3-amino-2-oxopropyl phosphate + 1-deoxy-D-xylulose 5-phosphate = pyridoxine 5'-phosphate + phosphate + 2 H2O + H(+). Its pathway is cofactor biosynthesis; pyridoxine 5'-phosphate biosynthesis; pyridoxine 5'-phosphate from D-erythrose 4-phosphate: step 5/5. In terms of biological role, catalyzes the complicated ring closure reaction between the two acyclic compounds 1-deoxy-D-xylulose-5-phosphate (DXP) and 3-amino-2-oxopropyl phosphate (1-amino-acetone-3-phosphate or AAP) to form pyridoxine 5'-phosphate (PNP) and inorganic phosphate. The chain is Pyridoxine 5'-phosphate synthase from Cupriavidus necator (strain ATCC 17699 / DSM 428 / KCTC 22496 / NCIMB 10442 / H16 / Stanier 337) (Ralstonia eutropha).